The primary structure comprises 467 residues: Light-independent protochlorophyllide reductase subunit N (467 aa).

The [4Fe-4S] cluster site is built by cysteine 23, cysteine 48, and cysteine 108.

The protein belongs to the BchN/ChlN family. Protochlorophyllide reductase is composed of three subunits; ChlL, ChlN and ChlB. Forms a heterotetramer of two ChlB and two ChlN subunits. The cofactor is [4Fe-4S] cluster.

It catalyses the reaction chlorophyllide a + oxidized 2[4Fe-4S]-[ferredoxin] + 2 ADP + 2 phosphate = protochlorophyllide a + reduced 2[4Fe-4S]-[ferredoxin] + 2 ATP + 2 H2O. Its pathway is porphyrin-containing compound metabolism; chlorophyll biosynthesis (light-independent). Its function is as follows. Component of the dark-operative protochlorophyllide reductase (DPOR) that uses Mg-ATP and reduced ferredoxin to reduce ring D of protochlorophyllide (Pchlide) to form chlorophyllide a (Chlide). This reaction is light-independent. The NB-protein (ChlN-ChlB) is the catalytic component of the complex. The sequence is that of Light-independent protochlorophyllide reductase subunit N from Trichormus variabilis (strain ATCC 29413 / PCC 7937) (Anabaena variabilis).